Consider the following 300-residue polypeptide: Ribosomal RNA small subunit methyltransferase H (300 aa).

Residues 33–35 (GGH), D52, F79, D100, and Q107 each bind S-adenosyl-L-methionine.

It belongs to the methyltransferase superfamily. RsmH family.

The protein localises to the cytoplasm. The enzyme catalyses cytidine(1402) in 16S rRNA + S-adenosyl-L-methionine = N(4)-methylcytidine(1402) in 16S rRNA + S-adenosyl-L-homocysteine + H(+). Specifically methylates the N4 position of cytidine in position 1402 (C1402) of 16S rRNA. The sequence is that of Ribosomal RNA small subunit methyltransferase H from Mycoplasmopsis agalactiae (strain NCTC 10123 / CIP 59.7 / PG2) (Mycoplasma agalactiae).